We begin with the raw amino-acid sequence, 1242 residues long: Myosin-16 (1242 aa).

The region spanning 6 to 55 (MVDSHVWVEDPERAWIDGVVLNIKGEEAEIKTNDGRDVIANLSRLYPKDT) is the Myosin N-terminal SH3-like domain. The region spanning 60-729 (EGVEDMTRLS…QMAELDAHRT (670 aa)) is the Myosin motor domain. Residues 154 to 161 (GESGSGKT) and 207 to 215 (NNNSSRFGK) each bind ATP. Actin-binding stretches follow at residues 493 to 527 (LIEK…YHTF), 529 to 552 (DHKR…AGDV), 587 to 610 (FPPL…KLQL), and 610 to 632 (LQQL…KPNN). IQ domains lie at 732–761 (LGES…ASVN), 755–784 (MRRA…EEAA), 780–809 (REEA…SALT), 803–832 (TKSS…TRAA), 828–857 (TTRA…VSLL), and 851–880 (LKRV…ADRK). Disordered stretches follow at residues 869-893 (KQLG…ELSN) and 908-1042 (EQSD…ERKT). Over residues 876–893 (QADRKEETEKERKVELSN) the composition is skewed to basic and acidic residues. Repeat copies occupy residues 876-908 (QADR…LHSE), 909-940 (QSDD…LHSE), 941-965 (QSDD…GHSD), 966-997 (QSDD…MHSD), 998-1029 (QSDD…VHSD), and 1030-1061 (QSDD…TCSE). A 6 X 33 AA repeats of Q-S-D-D-x-E-E-x(2)-H-x-R-K-x-K-x(2)-I-x(2)-E-D-G-x(3)-S-x-V-x-H-S-x region spans residues 876–1061 (QADRKEETEK…IQKSFVTCSE (186 aa)). A compositionally biased stretch (basic and acidic residues) spans 948–966 (GHERKTKLSIESEDGHSDQ). Residues 1079–1142 (DTEIESLTAE…QLQDSLNRLL (64 aa)) adopt a coiled-coil conformation. Positions 1175–1242 (DLADSSENSE…DKEGGFEDYF (68 aa)) are disordered. Residues 1179 to 1191 (SSENSEASSSDSD) are compositionally biased toward low complexity. Residues 1199–1224 (PSSDNFSTFNPNQLQVIVQDLSTTEA) are compositionally biased toward polar residues. Over residues 1225 to 1242 (KGTESYDSDKEGGFEDYF) the composition is skewed to basic and acidic residues.

The protein belongs to the TRAFAC class myosin-kinesin ATPase superfamily. Myosin family. Plant myosin class XI subfamily. In terms of assembly, homodimer. Expressed in flowers and leaves.

It is found in the cytoplasm. Its function is as follows. Myosin heavy chain that is required for the cell cycle-regulated transport of various organelles and proteins for their segregation. Functions by binding with its tail domain to receptor proteins on organelles and exerting force with its N-terminal motor domain against actin filaments, thereby transporting its cargo along polarized actin cables. The polypeptide is Myosin-16 (XI-J) (Arabidopsis thaliana (Mouse-ear cress)).